A 279-amino-acid polypeptide reads, in one-letter code: Thymidylate synthase 1 (279 aa).

141–142 (RR) provides a ligand contact to dUMP. Catalysis depends on Cys161, which acts as the Nucleophile. DUMP is bound by residues 181 to 184 (RSND), Asn192, and 222 to 224 (HVY). Asp184 is a (6R)-5,10-methylene-5,6,7,8-tetrahydrofolate binding site. (6R)-5,10-methylene-5,6,7,8-tetrahydrofolate is bound at residue Ala278.

Belongs to the thymidylate synthase family. Bacterial-type ThyA subfamily. As to quaternary structure, homodimer.

The protein localises to the cytoplasm. It catalyses the reaction dUMP + (6R)-5,10-methylene-5,6,7,8-tetrahydrofolate = 7,8-dihydrofolate + dTMP. The protein operates within pyrimidine metabolism; dTTP biosynthesis. In terms of biological role, catalyzes the reductive methylation of 2'-deoxyuridine-5'-monophosphate (dUMP) to 2'-deoxythymidine-5'-monophosphate (dTMP) while utilizing 5,10-methylenetetrahydrofolate (mTHF) as the methyl donor and reductant in the reaction, yielding dihydrofolate (DHF) as a by-product. This enzymatic reaction provides an intracellular de novo source of dTMP, an essential precursor for DNA biosynthesis. The chain is Thymidylate synthase 1 from Bacillus spizizenii (strain ATCC 23059 / NRRL B-14472 / W23) (Bacillus subtilis subsp. spizizenii).